A 249-amino-acid polypeptide reads, in one-letter code: Proteasome activator complex subunit 1 (249 aa).

The segment at 60 to 102 (PLDIPVPDPVKEKEKEERKKQQEKEDKDEKKKGEDEDKGPPCG) is disordered. Basic and acidic residues predominate over residues 68–98 (PVKEKEKEERKKQQEKEDKDEKKKGEDEDKG).

Belongs to the PA28 family. In terms of assembly, heterodimer of PSME1 and PSME2, which forms a hexameric ring. PSME1 can form homoheptamers.

Its function is as follows. Implicated in immunoproteasome assembly and required for efficient antigen processing. The PA28 activator complex enhances the generation of class I binding peptides by altering the cleavage pattern of the proteasome. This chain is Proteasome activator complex subunit 1 (PSME1), found in Sus scrofa (Pig).